A 376-amino-acid chain; its full sequence is Glucose-1-phosphate adenylyltransferase (376 aa).

Alpha-D-glucose 1-phosphate-binding positions include Tyr-101, Gly-166, 181 to 182, and Ser-192; that span reads EK.

This sequence belongs to the bacterial/plant glucose-1-phosphate adenylyltransferase family. In terms of assembly, homotetramer.

It catalyses the reaction alpha-D-glucose 1-phosphate + ATP + H(+) = ADP-alpha-D-glucose + diphosphate. It participates in glycan biosynthesis; glycogen biosynthesis. Its function is as follows. Involved in the biosynthesis of ADP-glucose, a building block required for the elongation reactions to produce glycogen. Catalyzes the reaction between ATP and alpha-D-glucose 1-phosphate (G1P) to produce pyrophosphate and ADP-Glc. This Bacillus thuringiensis (strain Al Hakam) protein is Glucose-1-phosphate adenylyltransferase.